Consider the following 174-residue polypeptide: Interleukin-10 (174 aa).

Positions 1–16 (MPTWMLLFCLLCVTSS) are cleaved as a signal peptide. Asn17 carries an N-linked (GlcNAc...) asparagine glycan. Cystine bridges form between Cys26–Cys122 and Cys76–Cys128.

The protein belongs to the IL-10 family. In terms of assembly, homodimer. Interacts with IL10RA and IL10RB.

It localises to the secreted. Functionally, major immune regulatory cytokine that acts on many cells of the immune system where it has profound anti-inflammatory functions, limiting excessive tissue disruption caused by inflammation. Mechanistically, IL10 binds to its heterotetrameric receptor comprising IL10RA and IL10RB leading to JAK1 and STAT2-mediated phosphorylation of STAT3. In turn, STAT3 translocates to the nucleus where it drives expression of anti-inflammatory mediators. Targets antigen-presenting cells (APCs) such as macrophages and monocytes and inhibits their release of pro-inflammatory cytokines including granulocyte-macrophage colony-stimulating factor /GM-CSF, granulocyte colony-stimulating factor/G-CSF, IL-1 alpha, IL-1 beta, IL-6, IL-8 and TNF-alpha. Also interferes with antigen presentation by reducing the expression of MHC-class II and co-stimulatory molecules, thereby inhibiting their ability to induce T cell activation. In addition, controls the inflammatory response of macrophages by reprogramming essential metabolic pathways including mTOR signaling. This Trichosurus vulpecula (Brush-tailed possum) protein is Interleukin-10 (IL10).